Reading from the N-terminus, the 668-residue chain is Threonine--tRNA ligase (668 aa).

A TGS domain is found at 1-64; the sequence is MSQSVSLTFP…TDGKIEIITR (64 aa). Positions 245-553 are catalytic; the sequence is DHRKLGREMD…LIENFAGHMP (309 aa). Positions 347, 398, and 530 each coordinate Zn(2+).

It belongs to the class-II aminoacyl-tRNA synthetase family. As to quaternary structure, homodimer. Zn(2+) serves as cofactor.

The protein localises to the cytoplasm. The enzyme catalyses tRNA(Thr) + L-threonine + ATP = L-threonyl-tRNA(Thr) + AMP + diphosphate + H(+). Catalyzes the attachment of threonine to tRNA(Thr) in a two-step reaction: L-threonine is first activated by ATP to form Thr-AMP and then transferred to the acceptor end of tRNA(Thr). Also edits incorrectly charged L-seryl-tRNA(Thr). This is Threonine--tRNA ligase from Rhizobium etli (strain ATCC 51251 / DSM 11541 / JCM 21823 / NBRC 15573 / CFN 42).